The chain runs to 247 residues: Geranylgeranylglyceryl phosphate synthase (247 aa).

2 residues coordinate Mg(2+): aspartate 23 and serine 52. Residues 171-177 (YLEAGSG), 203-204 (GG), and 225-226 (GT) contribute to the sn-glycerol 1-phosphate site.

It belongs to the GGGP/HepGP synthase family. Group II subfamily. Mg(2+) is required as a cofactor.

Its subcellular location is the cytoplasm. The enzyme catalyses sn-glycerol 1-phosphate + (2E,6E,10E)-geranylgeranyl diphosphate = sn-3-O-(geranylgeranyl)glycerol 1-phosphate + diphosphate. It participates in membrane lipid metabolism; glycerophospholipid metabolism. Its function is as follows. Prenyltransferase that catalyzes the transfer of the geranylgeranyl moiety of geranylgeranyl diphosphate (GGPP) to the C3 hydroxyl of sn-glycerol-1-phosphate (G1P). This reaction is the first ether-bond-formation step in the biosynthesis of archaeal membrane lipids. This chain is Geranylgeranylglyceryl phosphate synthase, found in Methanosarcina barkeri (strain Fusaro / DSM 804).